Consider the following 325-residue polypeptide: Tetraacyldisaccharide 4'-kinase (325 aa).

ATP is bound at residue 53–60; sequence SVGGNGKT.

It belongs to the LpxK family.

The enzyme catalyses a lipid A disaccharide + ATP = a lipid IVA + ADP + H(+). It functions in the pathway glycolipid biosynthesis; lipid IV(A) biosynthesis; lipid IV(A) from (3R)-3-hydroxytetradecanoyl-[acyl-carrier-protein] and UDP-N-acetyl-alpha-D-glucosamine: step 6/6. In terms of biological role, transfers the gamma-phosphate of ATP to the 4'-position of a tetraacyldisaccharide 1-phosphate intermediate (termed DS-1-P) to form tetraacyldisaccharide 1,4'-bis-phosphate (lipid IVA). The polypeptide is Tetraacyldisaccharide 4'-kinase (Mannheimia succiniciproducens (strain KCTC 0769BP / MBEL55E)).